A 382-amino-acid polypeptide reads, in one-letter code: Protein delta homolog 2 (382 aa).

A signal peptide spans 1–26 (MPSGCRCLNLVCLLCILGATSQPARA). EGF-like domains follow at residues 27 to 58 (DDCS…LHCE), 62 to 89 (RMPG…KFCD), 91 to 129 (DEHI…RGCE), and 131 to 172 (KAGP…AHCE). The Extracellular segment spans residues 27–305 (DDCSSHCDLA…RQEAGLGESS (279 aa)). 17 disulfides stabilise this stretch: Cys-29/Cys-40, Cys-33/Cys-46, Cys-48/Cys-57, Cys-66/Cys-71, Cys-79/Cys-88, Cys-95/Cys-107, Cys-101/Cys-117, Cys-119/Cys-128, Cys-135/Cys-148, Cys-142/Cys-160, Cys-162/Cys-171, Cys-178/Cys-189, Cys-183/Cys-198, Cys-200/Cys-209, Cys-216/Cys-227, Cys-221/Cys-236, and Cys-238/Cys-247. Residue Asn-157 is glycosylated (N-linked (GlcNAc...) asparagine). Residues 174–210 (NVDDCLMRPCANGATCIDGINRFSCLCPEGFAGRFCT) form the EGF-like 5; calcium-binding domain. An EGF-like 6; calcium-binding domain is found at 212–248 (NLDDCASRPCQRGARCRDRVHDFDCLCPSGYGGKTCE). A helical transmembrane segment spans residues 306 to 326 (LVALVVFGSLTAALVLATVLL). Residues 327–382 (TLRAWRRGICPTGPCCDPAPHYAPARQDQECQVSMLPAGFPLSPDLPPEPGKTTAL) lie on the Cytoplasmic side of the membrane.

The protein resides in the membrane. In terms of biological role, regulates adipogenesis. The polypeptide is Protein delta homolog 2 (Dlk2) (Rattus norvegicus (Rat)).